A 488-amino-acid chain; its full sequence is Probable glycine dehydrogenase (decarboxylating) subunit 2 (488 aa).

Lys274 carries the post-translational modification N6-(pyridoxal phosphate)lysine.

It belongs to the GcvP family. C-terminal subunit subfamily. As to quaternary structure, the glycine cleavage system is composed of four proteins: P, T, L and H. In this organism, the P 'protein' is a heterodimer of two subunits. Pyridoxal 5'-phosphate is required as a cofactor.

It catalyses the reaction N(6)-[(R)-lipoyl]-L-lysyl-[glycine-cleavage complex H protein] + glycine + H(+) = N(6)-[(R)-S(8)-aminomethyldihydrolipoyl]-L-lysyl-[glycine-cleavage complex H protein] + CO2. Its function is as follows. The glycine cleavage system catalyzes the degradation of glycine. The P protein binds the alpha-amino group of glycine through its pyridoxal phosphate cofactor; CO(2) is released and the remaining methylamine moiety is then transferred to the lipoamide cofactor of the H protein. The chain is Probable glycine dehydrogenase (decarboxylating) subunit 2 from Listeria monocytogenes serovar 1/2a (strain ATCC BAA-679 / EGD-e).